Consider the following 284-residue polypeptide: MSLAPVQVIGVLNVTDNSFSDGGRYLDPDDAVQHGLAMVAEGAAIVDVGGESTRPGAIRTDPRVELSRIVPVVKELAAQGITVSIDTTRADVARAALQSGARIVNDVSGGRADPAMAPLVAEAGVAWVLMHWRLMSAERPYEAPNYRDVVAEVRADLLAGVDQAVAAGVDPGSLVIDPGLGFAKTGQHNWALLNALPELVATGVPILLGASRKRFLGRLLAGADGAVRPPDGRETATAVISALAALHGAWGVRVHDVRASVDALKVVGAWLHAGPQIEKVRCDG.

Residues 6 to 265 (VQVIGVLNVT…DVRASVDALK (260 aa)) form the Pterin-binding domain. Residue N13 coordinates Mg(2+). Residues T53, D86, N105, D177, K213, and 253–255 (RVH) contribute to the (7,8-dihydropterin-6-yl)methyl diphosphate site.

This sequence belongs to the DHPS family. As to quaternary structure, homodimer. Mg(2+) is required as a cofactor.

It carries out the reaction (7,8-dihydropterin-6-yl)methyl diphosphate + 4-aminobenzoate = 7,8-dihydropteroate + diphosphate. It functions in the pathway cofactor biosynthesis; tetrahydrofolate biosynthesis; 7,8-dihydrofolate from 2-amino-4-hydroxy-6-hydroxymethyl-7,8-dihydropteridine diphosphate and 4-aminobenzoate: step 1/2. Is potently inhibited by the sulfone dapsone and the two sulfonamides sulfamethoxazole and sulfamethoxypyridazine, with Kis in the range of 12 to 32 nM. To a lesser extent, is also inhibited by p-aminosalicylate (PAS). Its function is as follows. Catalyzes the condensation of para-aminobenzoate (pABA) with 6-hydroxymethyl-7,8-dihydropterin diphosphate (DHPt-PP) to form 7,8-dihydropteroate, the immediate precursor of folate derivatives. The sequence is that of Dihydropteroate synthase (folP1) from Mycobacterium leprae (strain TN).